The chain runs to 272 residues: Orotidine 5'-phosphate decarboxylase (272 aa).

Lys-93 serves as the catalytic Proton donor.

It belongs to the OMP decarboxylase family. Type 2 subfamily.

It catalyses the reaction orotidine 5'-phosphate + H(+) = UMP + CO2. Its pathway is pyrimidine metabolism; UMP biosynthesis via de novo pathway; UMP from orotate: step 2/2. The protein is Orotidine 5'-phosphate decarboxylase of Roseiflexus sp. (strain RS-1).